The chain runs to 349 residues: Myocyte-specific enhancer factor 2B (349 aa).

The 55-residue stretch at 3–57 (RKKIQISRILDQRNRQVTFTKRKFGLMKKAYELSVLCDCDIALIIFNSAQRLFQY) folds into the MADS-box domain. Positions 58–86 (ASSDMDRVLLKYTEYSEPHESRTNADILQ) form a DNA-binding region, mef2-type. Disordered regions lie at residues 237 to 317 (GSFA…DFPR) and 330 to 349 (AEPL…SWPR).

This sequence belongs to the MEF2 family. As to quaternary structure, heterodimer. Interacts with HDAC9. Interacts with HDAC7. Highest expression found in embryonic heart and skeletal muscle. Low levels found in adult spleen, lung and testis while no expression is found in adult heart, brain or skeletal muscle.

The protein resides in the nucleus. Transcriptional activator which binds specifically to the MEF2 element, 5'-YTA[AT](4)TAR-3', found in numerous muscle-specific genes. Activates transcription via this element. May be involved in muscle-specific and/or growth factor-related transcription. The sequence is that of Myocyte-specific enhancer factor 2B (Mef2b) from Mus musculus (Mouse).